The chain runs to 492 residues: Virion host shutoff protein (492 aa).

Disordered stretches follow at residues Glu-110–Ser-130, Phe-143–Ser-165, Ser-288–Met-307, and Glu-334–Leu-369. Residues Ala-144–Ser-165 are compositionally biased toward low complexity.

The protein belongs to the herpesviridae VHS protein family. In terms of assembly, interacts with human EIF4H, EIF4A1 and EIF4A2; interaction with eIF4AI and EIF4A2 presumably allows Vhs protein to associate with the eIF4F cap-binding complex.

It localises to the virion. In terms of biological role, minor structural protein that acts as an endoribonuclease during lytic infection. Degrades host mRNAs in the cytoplasm by cutting them at preferred sites, including some in regions of translation initiation. Together with inhibition of host splicing by ICP27, contributes to an overall decrease in host protein synthesis. Also, after the onset of viral transcription, accelerates the turnover of viral mRNA, thereby facilitating the sequential expression of different classes of viral genes. Binds translation initiation factors eIF4H, eIF4AI, and eIF4AII, thereby may interact directly with the translation initiation complex and thus digest specifically mRNAs. Also impedes antigen presentation by major histocompatibility complex class I and class II molecules, inhibits secretion of cytokines that would otherwise recruit lymphocytes and neutrophils cells to the site of infection and blocks the activation of dendritic cells. Impedes the alpha/beta interferon-mediated response to infection. Inhibits the integrated stress response (ISR) in the infected cell, this function requires the endonuclease activity. Stress granule formation is thus inhibited, which allows protein synthesis and viral replication. The protein is Virion host shutoff protein (UL41) of Human herpesvirus 2 (strain G) (HHV-2).